Consider the following 106-residue polypeptide: UPF0145 protein PP_2873 (106 aa).

It belongs to the UPF0145 family.

This Pseudomonas putida (strain ATCC 47054 / DSM 6125 / CFBP 8728 / NCIMB 11950 / KT2440) protein is UPF0145 protein PP_2873.